The following is a 328-amino-acid chain: Lytic polysaccharide monooxygenase aasB (328 aa).

The signal sequence occupies residues 1-18; sequence MKAFFAISASTLLATVHG. His-19 provides a ligand contact to Cu(2+). Cys-40 and Cys-43 are oxidised to a cystine. Asn-54 carries an N-linked (GlcNAc...) asparagine glycan. Disulfide bonds link Cys-66-Cys-245, Cys-102-Cys-203, Cys-118-Cys-145, Cys-153-Cys-161, Cys-167-Cys-173, and Cys-181-Cys-192. His-109 lines the Cu(2+) pocket. Residue Tyr-242 coordinates Cu(2+). N-linked (GlcNAc...) asparagine glycosylation occurs at Asn-306.

It belongs to the polysaccharide monooxygenase AA13 family. Requires Cu(2+) as cofactor.

The protein resides in the secreted. It carries out the reaction starch + reduced acceptor + O2 = D-glucono-1,5-lactone-terminated malto-oligosaccharides + short-chain malto-oligosaccharides + acceptor + H2O.. Functionally, lytic polysaccharide monooxygenase involved in breakdown of granular resistant starch. The sequence is that of Lytic polysaccharide monooxygenase aasB from Emericella nidulans (strain FGSC A4 / ATCC 38163 / CBS 112.46 / NRRL 194 / M139) (Aspergillus nidulans).